A 110-amino-acid polypeptide reads, in one-letter code: UPF0060 membrane protein Mmwyl1_1139 (110 aa).

4 helical membrane-spanning segments follow: residues 7-27 (ISLF…PYLW), 33-53 (TIWL…LLTL), 63-83 (AAYG…VDGI), and 87-107 (TWDM…MFAP).

It belongs to the UPF0060 family.

Its subcellular location is the cell inner membrane. In Marinomonas sp. (strain MWYL1), this protein is UPF0060 membrane protein Mmwyl1_1139.